The primary structure comprises 387 residues: Zinc finger protein neuro-d4 (387 aa).

Residues Lys106, Lys129, and Lys133 each participate in a glycyl lysine isopeptide (Lys-Gly) (interchain with G-Cter in SUMO2) cross-link. Residues 195 to 218 (YVCDICGKRYKNRPGLSYHYTHTH) form a C2H2-type zinc finger. 2 consecutive PHD-type zinc fingers follow at residues 271 to 328 (NGYC…CKSC) and 325 to 375 (CKSC…CLRH). The Zn(2+) site is built by Cys274, Cys277, Cys293, Cys296, His301, Cys304, Cys322, Cys325, Cys328, Cys331, Cys343, Cys346, His351, Cys354, Cys369, and Cys372.

Belongs to the requiem/DPF family. Component of neuron-specific chromatin remodeling complex (nBAF complex) composed of at least, ARID1A/BAF250A or ARID1B/BAF250B, SMARCD1/BAF60A, SMARCD3/BAF60C, SMARCA2/BRM/BAF190B, SMARCA4/BRG1/BAF190A, SMARCB1/BAF47, SMARCC1/BAF155, SMARCE1/BAF57, SMARCC2/BAF170, DPF1/BAF45B, DPF3/BAF45C, ACTL6B/BAF53B and actin. In terms of tissue distribution, at embryonic stages, predominant expression in the nervous system. Expressed specifically in postmitotic neurons (at protein level).

Its subcellular location is the cytoplasm. It is found in the nucleus. May have an important role in developing neurons by participating in regulation of cell survival, possibly as a neurospecific transcription factor. Belongs to the neuron-specific chromatin remodeling complex (nBAF complex). During neural development a switch from a stem/progenitor to a postmitotic chromatin remodeling mechanism occurs as neurons exit the cell cycle and become committed to their adult state. The transition from proliferating neural stem/progenitor cells to postmitotic neurons requires a switch in subunit composition of the npBAF and nBAF complexes. As neural progenitors exit mitosis and differentiate into neurons, npBAF complexes which contain ACTL6A/BAF53A and PHF10/BAF45A, are exchanged for homologous alternative ACTL6B/BAF53B and DPF1/BAF45B or DPF3/BAF45C subunits in neuron-specific complexes (nBAF). The npBAF complex is essential for the self-renewal/proliferative capacity of the multipotent neural stem cells. The nBAF complex along with CREST plays a role regulating the activity of genes essential for dendrite growth. This Mus musculus (Mouse) protein is Zinc finger protein neuro-d4.